The primary structure comprises 289 residues: Diaminopimelate epimerase (289 aa).

Substrate is bound by residues Asn11 and Asn78. The Proton donor role is filled by Cys87. Substrate contacts are provided by residues 88 to 89 (GN), Asn163, Asn199, and 217 to 218 (ER). Cys226 (proton acceptor) is an active-site residue. 227–228 (GT) provides a ligand contact to substrate.

This sequence belongs to the diaminopimelate epimerase family. Homodimer.

The protein resides in the cytoplasm. It catalyses the reaction (2S,6S)-2,6-diaminopimelate = meso-2,6-diaminopimelate. Its pathway is amino-acid biosynthesis; L-lysine biosynthesis via DAP pathway; DL-2,6-diaminopimelate from LL-2,6-diaminopimelate: step 1/1. Catalyzes the stereoinversion of LL-2,6-diaminopimelate (L,L-DAP) to meso-diaminopimelate (meso-DAP), a precursor of L-lysine and an essential component of the bacterial peptidoglycan. The protein is Diaminopimelate epimerase of Rhodococcus opacus (strain B4).